The following is a 190-amino-acid chain: dTTP/UTP pyrophosphatase (190 aa).

The Proton acceptor role is filled by Asp71.

This sequence belongs to the Maf family. YhdE subfamily. A divalent metal cation is required as a cofactor.

Its subcellular location is the cytoplasm. The enzyme catalyses dTTP + H2O = dTMP + diphosphate + H(+). It catalyses the reaction UTP + H2O = UMP + diphosphate + H(+). Nucleoside triphosphate pyrophosphatase that hydrolyzes dTTP and UTP. May have a dual role in cell division arrest and in preventing the incorporation of modified nucleotides into cellular nucleic acids. In Xanthomonas axonopodis pv. citri (strain 306), this protein is dTTP/UTP pyrophosphatase.